A 337-amino-acid polypeptide reads, in one-letter code: Eukaryotic translation initiation factor 3 subunit H (337 aa).

The MPN domain occupies 21 to 153; the sequence is VQCDGLAVMK…LKAYRLTPQA (133 aa).

It belongs to the eIF-3 subunit H family. In terms of assembly, component of the eukaryotic translation initiation factor 3 (eIF-3) complex. The eIF-3 complex interacts with pix. Interacts with mxt.

It localises to the cytoplasm. Functionally, component of the eukaryotic translation initiation factor 3 (eIF-3) complex, which is involved in protein synthesis of a specialized repertoire of mRNAs and, together with other initiation factors, stimulates binding of mRNA and methionyl-tRNAi to the 40S ribosome. The eIF-3 complex specifically targets and initiates translation of a subset of mRNAs involved in cell proliferation. This chain is Eukaryotic translation initiation factor 3 subunit H, found in Drosophila virilis (Fruit fly).